The following is a 795-amino-acid chain: Lon protease (795 aa).

The Lon N-terminal domain occupies 7–213 (PQILVVRNQV…KIIGSGIEDL (207 aa)). 379-386 (GPPGVGKS) is a binding site for ATP. The Lon proteolytic domain occupies 615–795 (DALPGIVNGM…YKDIYNKIFN (181 aa)). Residues Ser702 and Lys745 contribute to the active site.

Belongs to the peptidase S16 family. Homohexamer. Organized in a ring with a central cavity.

It localises to the cytoplasm. The catalysed reaction is Hydrolysis of proteins in presence of ATP.. ATP-dependent serine protease that mediates the selective degradation of mutant and abnormal proteins as well as certain short-lived regulatory proteins. Required for cellular homeostasis and for survival from DNA damage and developmental changes induced by stress. Degrades polypeptides processively to yield small peptide fragments that are 5 to 10 amino acids long. Binds to DNA in a double-stranded, site-specific manner. This Mycoplasma pneumoniae (strain ATCC 29342 / M129 / Subtype 1) (Mycoplasmoides pneumoniae) protein is Lon protease.